Here is a 231-residue protein sequence, read N- to C-terminus: 7-cyano-7-deazaguanine synthase (231 aa).

Phe8–Leu18 serves as a coordination point for ATP. Cys188, Cys197, Cys200, and Cys203 together coordinate Zn(2+).

Belongs to the QueC family. Zn(2+) is required as a cofactor.

It carries out the reaction 7-carboxy-7-deazaguanine + NH4(+) + ATP = 7-cyano-7-deazaguanine + ADP + phosphate + H2O + H(+). Its pathway is purine metabolism; 7-cyano-7-deazaguanine biosynthesis. Catalyzes the ATP-dependent conversion of 7-carboxy-7-deazaguanine (CDG) to 7-cyano-7-deazaguanine (preQ(0)). The polypeptide is 7-cyano-7-deazaguanine synthase (Salmonella paratyphi B (strain ATCC BAA-1250 / SPB7)).